Here is a 170-residue protein sequence, read N- to C-terminus: uncharacterized protein (170 aa).

The helical transmembrane segment at 7–27 (LVELLIGLAIISIALNFAVPL) threads the bilayer.

Its subcellular location is the membrane. This is an uncharacterized protein from Haemophilus influenzae (strain ATCC 51907 / DSM 11121 / KW20 / Rd).